The chain runs to 345 residues: MNINDILKKLINKSDLEIDEAEELAKAIIRGEVPEILVSAILVALRMKGESKNEIVGFARAMRELAIKIDVPNAIDTAGTGGDGLGTVNVSTASAILLSLINPVAKHGNRAVSGKSGSADVLEALGYNIIVPPERAKELVHKTNFVFLFAQYYHPAMKNVANVRKTLGIRTIFNILGPLTNPANAKYQLMGVFSKDHLDLLSKSAYELDFNKVILVHGEPGIDEVSPIGKTFMKIVSKRGIEEVKFDVTDFGISSIPIDKLIVNSAEDSAIKIVRAFLGKDEHVAEFIKINTAVALFALDKVSDFKEGYEYAKYLIENSVNKLNEIISLNGDLTKLKTIMVKSSG.

5-phospho-alpha-D-ribose 1-diphosphate-binding positions include G79, 82-83 (GD), T87, 89-92 (NVST), 106-114 (KHGNRAVSG), and S118. Residue G79 coordinates anthranilate. Position 91 (S91) interacts with Mg(2+). N109 is a binding site for anthranilate. Position 164 (R164) interacts with anthranilate. Residues D223 and E224 each contribute to the Mg(2+) site.

It belongs to the anthranilate phosphoribosyltransferase family. As to quaternary structure, homodimer. It depends on Mg(2+) as a cofactor.

It catalyses the reaction N-(5-phospho-beta-D-ribosyl)anthranilate + diphosphate = 5-phospho-alpha-D-ribose 1-diphosphate + anthranilate. Its pathway is amino-acid biosynthesis; L-tryptophan biosynthesis; L-tryptophan from chorismate: step 2/5. Catalyzes the transfer of the phosphoribosyl group of 5-phosphorylribose-1-pyrophosphate (PRPP) to anthranilate to yield N-(5'-phosphoribosyl)-anthranilate (PRA). The chain is Anthranilate phosphoribosyltransferase from Saccharolobus islandicus (strain M.14.25 / Kamchatka #1) (Sulfolobus islandicus).